Here is an 88-residue protein sequence, read N- to C-terminus: Small ribosomal subunit protein bS20 (88 aa).

It belongs to the bacterial ribosomal protein bS20 family.

Functionally, binds directly to 16S ribosomal RNA. The protein is Small ribosomal subunit protein bS20 of Clostridium acetobutylicum (strain ATCC 824 / DSM 792 / JCM 1419 / IAM 19013 / LMG 5710 / NBRC 13948 / NRRL B-527 / VKM B-1787 / 2291 / W).